The chain runs to 477 residues: Proton-coupled amino acid transporter 3 (477 aa).

At 1–54 (MGNVPLLREVGKCQRNMFGRSTASSKGSSNSRSSSSTSPKKGPRREADALMFIQ) the chain is on the cytoplasmic side. The span at 19-40 (GRSTASSKGSSNSRSSSSTSPK) shows a compositional bias: low complexity. A disordered region spans residues 19 to 43 (GRSTASSKGSSNSRSSSSTSPKKGP). The helical transmembrane segment at 55-75 (IFIHLLKSNIGTGFLGLPLAV) threads the bilayer. The Extracellular segment spans residues 76-77 (KN). The helical transmembrane segment at 78-98 (AGLLVGPVSLLAIGALTVHCM) threads the bilayer. At 99–144 (DILLNCACHLTQRLQRSFVNYEETTMYSLETCPSPWLRTHSVWGRY) the chain is on the cytoplasmic side. A helical membrane pass occupies residues 145 to 165 (VVSFLLIVTQLGFCSVYFMFL). Topologically, residues 166 to 202 (ADNLQQIMEEAHFTSNVCQPRQSLVMTSILDTRFYML) are extracellular. Residues 203–223 (TILPFLILLVLIQNPQVLSIF) form a helical membrane-spanning segment. The Cytoplasmic portion of the chain corresponds to 224–225 (ST). The helical transmembrane segment at 226–246 (LATITTLSSLALIFEYLIQTP) threads the bilayer. Residues 247-259 (HHSNLPLVANWKT) are Extracellular-facing. The helical transmembrane segment at 260–280 (FLLFFGTAIFTFEGVGMVLPL) threads the bilayer. The Cytoplasmic portion of the chain corresponds to 281–291 (KSQMKSPQQFP). A helical transmembrane segment spans residues 292-312 (AVLYLGMSFVIFLYICLGTLG). Residues 313–344 (YMKFGTDTQASITLNLPICWLYQSVKLMYSVG) lie on the Extracellular side of the membrane. A helical membrane pass occupies residues 345–365 (IFFTYALQFHVPAEIIVPYVV). The Cytoplasmic segment spans residues 366-374 (SRVSENWAL). A helical transmembrane segment spans residues 375–395 (FVDLTVRTALVCLTCFSAVLI). Residues 396 to 399 (PRLD) are Extracellular-facing. A helical membrane pass occupies residues 400-420 (LVISLVGSVSSSALAIIIPPL). Residues 421–432 (LEIATFYSENIS) are Cytoplasmic-facing. A helical membrane pass occupies residues 433–453 (CATIVKDIMISILGLLGCVLG). At 454 to 477 (TYQALYEMTQQTHFYMANSTRVHI) the chain is on the extracellular side.

The protein belongs to the amino acid/polyamine transporter 2 family. In terms of tissue distribution, specifically expressed in testis.

It localises to the membrane. The chain is Proton-coupled amino acid transporter 3 (Slc36a3) from Mus musculus (Mouse).